Reading from the N-terminus, the 905-residue chain is Tight junction protein ZO-3 (905 aa).

The region spanning 11 to 93 is the PDZ 1 domain; it reads TATLYKDPRR…TANVTVKRPR (83 aa). The disordered stretch occupies residues 92–167; the sequence is PRRVQLPATK…GGGSEANGLD (76 aa). A phosphoserine mark is found at serine 111 and serine 128. Residues 124-133 are compositionally biased toward low complexity; sequence GDSSSGSGRS. The segment covering 139 to 155 has biased composition (basic residues); that stretch reads RRSRAGRRGRVGSHGRR. Phosphoserine occurs at positions 156, 157, 161, 195, and 311. The 78-residue stretch at 187–264 folds into the PDZ 2 domain; sequence SVLVKRRNSE…ELTLLVLRDS (78 aa). The tract at residues 289–367 is disordered; that stretch reads LTSELSQAPP…QSLEDRGYSP (79 aa). Threonine 317 carries the post-translational modification Phosphothreonine. A phosphoserine mark is found at serine 319, serine 343, and serine 359. The 67-residue stretch at 368–434 folds into the PDZ 3 domain; it reads DTRVVSFPKG…LTREEAVQFL (67 aa). An SH3 domain is found at 464 to 541; the sequence is GDSFYIRTHF…PNQSRAEQLA (78 aa). Residues 573-754 form the Guanylate kinase-like domain; it reads RRGTKKASTQ…WYQEVKAVIQ (182 aa). Serine 584 carries the phosphoserine modification. Disordered stretches follow at residues 773-818 and 850-905; these read EDLD…PQDV and TDKW…ATDL. Residues 851 to 877 show a composition bias toward basic and acidic residues; the sequence is DKWETQADSHYTQDQRRQDSMRTYKHE. Phosphoserine occurs at positions 891 and 892.

It belongs to the MAGUK family. In terms of assembly, interacts with occludin OCLN, claudins and TPJ1. Interacts with PATJ. Interacts with UBN1. Interacts with FASLG. Interacts with CCND1. Phosphorylated. As to expression, is concentrated in various types of epithelium, in tissues such as the lung, liver and kidney, but not in endothelium or at cadherin-based cell-cell adhesion sites.

It is found in the cell membrane. Its subcellular location is the cell junction. The protein localises to the tight junction. It localises to the nucleus. In terms of biological role, tjp1, Tjp2, and Tjp3 are closely related scaffolding proteins that link tight junction (TJ) transmembrane proteins such as claudins, junctional adhesion molecules, and occludin to the actin cytoskeleton. The tight junction acts to limit movement of substances through the paracellular space and as a boundary between the compositionally distinct apical and basolateral plasma membrane domains of epithelial and endothelial cells. Binds and recruits PatJ to tight junctions where it connects and stabilizes apical and lateral components of tight junctions. Promotes cell-cycle progression through the sequestration of cyclin D1 (Ccnd1) at tight junctions during mitosis which prevents Ccnd1 degradation during M-phase and enables S-phase transition. With Tjp1 and Tjp2, participates in the junctional retention and stability of the transcription factor DbpA, but is not involved in its shuttling to the nucleus. Contrary to Tjp2, Tjp3 is dispensable for individual viability, embryonic development, epithelial differentiation, and the establishment of TJs, at least in the laboratory environment. In Mus musculus (Mouse), this protein is Tight junction protein ZO-3 (Tjp3).